Consider the following 212-residue polypeptide: tRNA(Phe) 7-((3-amino-3-carboxypropyl)-4-demethylwyosine(37)-N(4))-methyltransferase 2 (212 aa).

Belongs to the TYW3 family.

The catalysed reaction is 4-demethyl-7-[(3S)-3-amino-3-carboxypropyl]wyosine(37) in tRNA(Phe) + S-adenosyl-L-methionine = 7-[(3S)-3-amino-3-carboxypropyl]wyosine(37) in tRNA(Phe) + S-adenosyl-L-homocysteine + H(+). S-adenosyl-L-methionine-dependent methyltransferase that acts as a component of the wyosine derivatives biosynthesis pathway. Probably methylates N-4 position of wybutosine-86 to produce wybutosine-72. This Thermococcus kodakarensis (strain ATCC BAA-918 / JCM 12380 / KOD1) (Pyrococcus kodakaraensis (strain KOD1)) protein is tRNA(Phe) 7-((3-amino-3-carboxypropyl)-4-demethylwyosine(37)-N(4))-methyltransferase 2.